The chain runs to 121 residues: Ribonuclease P protein component 4 (121 aa).

Zn(2+) contacts are provided by C63, C66, C89, and C92.

It belongs to the eukaryotic/archaeal RNase P protein component 4 family. As to quaternary structure, consists of a catalytic RNA component and at least 4-5 protein subunits. Zn(2+) is required as a cofactor.

Its subcellular location is the cytoplasm. The enzyme catalyses Endonucleolytic cleavage of RNA, removing 5'-extranucleotides from tRNA precursor.. Functionally, part of ribonuclease P, a protein complex that generates mature tRNA molecules by cleaving their 5'-ends. The chain is Ribonuclease P protein component 4 from Methanobrevibacter smithii (strain ATCC 35061 / DSM 861 / OCM 144 / PS).